Consider the following 356-residue polypeptide: S-adenosylmethionine:tRNA ribosyltransferase-isomerase (356 aa).

The protein belongs to the QueA family. In terms of assembly, monomer.

The protein localises to the cytoplasm. It catalyses the reaction 7-aminomethyl-7-carbaguanosine(34) in tRNA + S-adenosyl-L-methionine = epoxyqueuosine(34) in tRNA + adenine + L-methionine + 2 H(+). The protein operates within tRNA modification; tRNA-queuosine biosynthesis. In terms of biological role, transfers and isomerizes the ribose moiety from AdoMet to the 7-aminomethyl group of 7-deazaguanine (preQ1-tRNA) to give epoxyqueuosine (oQ-tRNA). This is S-adenosylmethionine:tRNA ribosyltransferase-isomerase from Xanthomonas oryzae pv. oryzae (strain KACC10331 / KXO85).